The chain runs to 298 residues: tRNA-cytidine(32) 2-sulfurtransferase (298 aa).

Residues 1 to 26 (MTAVISLPDPPQRASRGPRVAGPGQD) form a disordered region. A PP-loop motif motif is present at residues 57–62 (SGGKDS). Cysteine 132, cysteine 135, and cysteine 223 together coordinate [4Fe-4S] cluster.

This sequence belongs to the TtcA family. In terms of assembly, homodimer. Requires Mg(2+) as cofactor. [4Fe-4S] cluster serves as cofactor.

The protein localises to the cytoplasm. The catalysed reaction is cytidine(32) in tRNA + S-sulfanyl-L-cysteinyl-[cysteine desulfurase] + AH2 + ATP = 2-thiocytidine(32) in tRNA + L-cysteinyl-[cysteine desulfurase] + A + AMP + diphosphate + H(+). The protein operates within tRNA modification. Functionally, catalyzes the ATP-dependent 2-thiolation of cytidine in position 32 of tRNA, to form 2-thiocytidine (s(2)C32). The sulfur atoms are provided by the cysteine/cysteine desulfurase (IscS) system. This chain is tRNA-cytidine(32) 2-sulfurtransferase, found in Stenotrophomonas maltophilia (strain R551-3).